Reading from the N-terminus, the 137-residue chain is Phosphoribosyl-AMP cyclohydrolase (137 aa).

Asp-84 contacts Mg(2+). Cys-85 is a binding site for Zn(2+). The Mg(2+) site is built by Asp-86 and Asp-88. Residues Cys-101 and Cys-108 each contribute to the Zn(2+) site.

It belongs to the PRA-CH family. In terms of assembly, homodimer. Mg(2+) serves as cofactor. Requires Zn(2+) as cofactor.

Its subcellular location is the cytoplasm. The catalysed reaction is 1-(5-phospho-beta-D-ribosyl)-5'-AMP + H2O = 1-(5-phospho-beta-D-ribosyl)-5-[(5-phospho-beta-D-ribosylamino)methylideneamino]imidazole-4-carboxamide. It functions in the pathway amino-acid biosynthesis; L-histidine biosynthesis; L-histidine from 5-phospho-alpha-D-ribose 1-diphosphate: step 3/9. Its function is as follows. Catalyzes the hydrolysis of the adenine ring of phosphoribosyl-AMP. The sequence is that of Phosphoribosyl-AMP cyclohydrolase from Pelodictyon phaeoclathratiforme (strain DSM 5477 / BU-1).